The primary structure comprises 217 residues: 3,4-dihydroxy-2-butanone 4-phosphate synthase (217 aa).

D-ribulose 5-phosphate is bound by residues Arg37–Glu38, Asp42, Arg150–Thr154, and Glu174. Mg(2+) is bound at residue Glu38. Mg(2+) is bound at residue His153.

It belongs to the DHBP synthase family. As to quaternary structure, homodimer. Mg(2+) serves as cofactor. The cofactor is Mn(2+).

The enzyme catalyses D-ribulose 5-phosphate = (2S)-2-hydroxy-3-oxobutyl phosphate + formate + H(+). The protein operates within cofactor biosynthesis; riboflavin biosynthesis; 2-hydroxy-3-oxobutyl phosphate from D-ribulose 5-phosphate: step 1/1. In terms of biological role, catalyzes the conversion of D-ribulose 5-phosphate to formate and 3,4-dihydroxy-2-butanone 4-phosphate. The chain is 3,4-dihydroxy-2-butanone 4-phosphate synthase from Salmonella heidelberg (strain SL476).